Consider the following 90-residue polypeptide: DNA-binding protein HU-alpha (90 aa).

The protein belongs to the bacterial histone-like protein family. Heterodimer of an alpha and a beta chain.

Its function is as follows. Histone-like DNA-binding protein which is capable of wrapping DNA to stabilize it, and thus to prevent its denaturation under extreme environmental conditions. In Escherichia coli O157:H7, this protein is DNA-binding protein HU-alpha (hupA).